The following is a 280-amino-acid chain: 4-diphosphocytidyl-2-C-methyl-D-erythritol kinase (280 aa).

Lys8 is an active-site residue. 91-101 (PVSAGLAGGST) lines the ATP pocket. The active site involves Asp133.

Belongs to the GHMP kinase family. IspE subfamily.

The catalysed reaction is 4-CDP-2-C-methyl-D-erythritol + ATP = 4-CDP-2-C-methyl-D-erythritol 2-phosphate + ADP + H(+). It functions in the pathway isoprenoid biosynthesis; isopentenyl diphosphate biosynthesis via DXP pathway; isopentenyl diphosphate from 1-deoxy-D-xylulose 5-phosphate: step 3/6. Functionally, catalyzes the phosphorylation of the position 2 hydroxy group of 4-diphosphocytidyl-2C-methyl-D-erythritol. In Clostridium beijerinckii (strain ATCC 51743 / NCIMB 8052) (Clostridium acetobutylicum), this protein is 4-diphosphocytidyl-2-C-methyl-D-erythritol kinase.